Consider the following 156-residue polypeptide: Ribosome maturation factor RimP (156 aa).

This sequence belongs to the RimP family.

The protein localises to the cytoplasm. In terms of biological role, required for maturation of 30S ribosomal subunits. The chain is Ribosome maturation factor RimP from Anoxybacillus flavithermus (strain DSM 21510 / WK1).